Consider the following 364-residue polypeptide: MELEGRGAGGVAGGPAAGPGRSPGESALLDGWLQRGVGRGAGGGEAGACRPPVRQDPDSGPDYEALPAGATVTTHMVAGAVAGILEHCVMYPIDCVKTRMQSLQPDPAARYRNVLEALWRIIRTEGLWRPMRGLNVTATGAGPAHALYFACYEKLKKTLSDVIHPGGNSHIANGAAGCVATLLHDAAMNPAEVVKQRMQMYNSPYHRVTDCVRAVWQNEGAGAFYRSYTTQLTMNVPFQAIHFMTYEFLQEHFNPQRRYNPSSHVLSGACAGAVAAAATTPLDVCKTLLNTQESLALNSHITGHITGMASAFRTVYQVGGVTAYFRGVQARVIYQIPSTAIAWSVYEFFKYLITKRQEEWRAGK.

Positions 1 to 17 (MELEGRGAGGVAGGPAA) are enriched in gly residues. Disordered stretches follow at residues 1–28 (MELE…ESAL) and 40–60 (GAGG…PDSG). Residues 18–27 (GPGRSPGESA) are compositionally biased toward low complexity. 3 Solcar repeats span residues 70–158 (ATVT…LKKT), 168–252 (NSHI…LQEH), and 259–352 (YNPS…FKYL). 6 helical membrane-spanning segments follow: residues 72–91 (VTTH…CVMY), 133–152 (GLNV…FACY), 170–189 (HIAN…AAMN), 227–246 (SYTT…FMTY), 261–280 (PSSH…AATT), and 327–346 (GVQA…WSVY).

Belongs to the mitochondrial carrier (TC 2.A.29) family. As to expression, ubiquitous. Expressed in placenta, lung, kidney, pancreas, liver, brain, skeletal muscle and heart.

The protein resides in the mitochondrion inner membrane. The enzyme catalyses Fe(2+)(in) = Fe(2+)(out). Mitochondrial iron transporter that mediates iron uptake. Probably required for heme synthesis of hemoproteins and Fe-S cluster assembly in non-erythroid cells. The sequence is that of Mitoferrin-2 (SLC25A28) from Homo sapiens (Human).